Here is a 436-residue protein sequence, read N- to C-terminus: Serine carboxypeptidase-like 15 (436 aa).

An N-terminal signal peptide occupies residues 1–24 (MASWIFKLLLLLQCVLVLIQHADS). 3 disulfides stabilise this stretch: C83/C326, C247/C261, and C285/C292. A glycan (N-linked (GlcNAc...) asparagine) is linked at N104. S179 is a catalytic residue. Residues N306 and N345 are each glycosylated (N-linked (GlcNAc...) asparagine). Residue D361 is part of the active site. An N-linked (GlcNAc...) asparagine glycan is attached at N377. Residue H414 is part of the active site.

The protein belongs to the peptidase S10 family. As to expression, expressed in seedlings and roots.

The protein resides in the secreted. Its function is as follows. Probable carboxypeptidase. This is Serine carboxypeptidase-like 15 (SCPL15) from Arabidopsis thaliana (Mouse-ear cress).